The chain runs to 719 residues: Photosystem I P700 chlorophyll a apoprotein A1 (719 aa).

Helical transmembrane passes span 60–83, 146–169, 185–209, 281–299, 336–359, 375–401, 423–445, and 521–539; these read IFSAHFGQLSIIFIWLSGMYFHGA, LYCTAIGALIFAGLMLFAGWFHYH, LNHHLAGLLGLGSLGWAGHQVHVSL, TAHHHIAIAVLFLIAGHMY, WHAQLAVNLAMLGSLTIIVAHHMY, LSLFTHHMWIGGFLVVGAAAHAAIFMV, AIISHLNWVCIFLGFHSFGLYIH, and FLVHHIHAFTIHVTVLILL. Residues Cys-563 and Cys-572 each contribute to the [4Fe-4S] cluster site. 2 helical membrane-spanning segments follow: residues 579 to 600 and 654 to 676; these read HVFLGLFWMYNSISVVIFHFSW and LSAYGLLFLGAHFVWAFSLMFLF. Residue His-665 participates in chlorophyll a' binding. Residues Met-673 and Tyr-681 each contribute to the chlorophyll a site. Trp-682 contributes to the phylloquinone binding site. A helical transmembrane segment spans residues 714–719; that stretch reads AVGVAH.

This sequence belongs to the PsaA/PsaB family. As to quaternary structure, the PsaA/B heterodimer binds the P700 chlorophyll special pair and subsequent electron acceptors. PSI consists of a core antenna complex that captures photons, and an electron transfer chain that converts photonic excitation into a charge separation. The eukaryotic PSI reaction center is composed of at least 11 subunits. P700 is a chlorophyll a/chlorophyll a' dimer, A0 is one or more chlorophyll a, A1 is one or both phylloquinones and FX is a shared 4Fe-4S iron-sulfur center. is required as a cofactor.

Its subcellular location is the plastid. It localises to the chloroplast thylakoid membrane. The enzyme catalyses reduced [plastocyanin] + hnu + oxidized [2Fe-2S]-[ferredoxin] = oxidized [plastocyanin] + reduced [2Fe-2S]-[ferredoxin]. Functionally, psaA and PsaB bind P700, the primary electron donor of photosystem I (PSI), as well as the electron acceptors A0, A1 and FX. PSI is a plastocyanin-ferredoxin oxidoreductase, converting photonic excitation into a charge separation, which transfers an electron from the donor P700 chlorophyll pair to the spectroscopically characterized acceptors A0, A1, FX, FA and FB in turn. Oxidized P700 is reduced on the lumenal side of the thylakoid membrane by plastocyanin. The chain is Photosystem I P700 chlorophyll a apoprotein A1 from Equisetum palustre (Marsh horsetail).